We begin with the raw amino-acid sequence, 80 residues long: Acyl carrier protein (80 aa).

The region spanning 2–77 (SEINQKVVDI…QVVEYLEKRL (76 aa)) is the Carrier domain. Position 37 is an O-(pantetheine 4'-phosphoryl)serine (S37).

It belongs to the acyl carrier protein (ACP) family. In terms of processing, 4'-phosphopantetheine is transferred from CoA to a specific serine of apo-ACP by AcpS. This modification is essential for activity because fatty acids are bound in thioester linkage to the sulfhydryl of the prosthetic group.

The protein localises to the cytoplasm. The protein operates within lipid metabolism; fatty acid biosynthesis. Its function is as follows. Carrier of the growing fatty acid chain in fatty acid biosynthesis. This Amoebophilus asiaticus (strain 5a2) protein is Acyl carrier protein.